We begin with the raw amino-acid sequence, 394 residues long: 1-deoxy-D-xylulose 5-phosphate reductoisomerase (394 aa).

Threonine 14, glycine 15, serine 16, isoleucine 17, glycine 40, and asparagine 128 together coordinate NADPH. A 1-deoxy-D-xylulose 5-phosphate-binding site is contributed by lysine 129. Position 130 (glutamate 130) interacts with NADPH. Mn(2+) is bound at residue aspartate 154. Positions 155, 156, 180, and 203 each coordinate 1-deoxy-D-xylulose 5-phosphate. Residue glutamate 156 participates in Mn(2+) binding. NADPH is bound at residue glycine 209. Serine 216, asparagine 221, lysine 222, and glutamate 225 together coordinate 1-deoxy-D-xylulose 5-phosphate. Residue glutamate 225 coordinates Mn(2+).

It belongs to the DXR family. Mg(2+) is required as a cofactor. Mn(2+) serves as cofactor.

It catalyses the reaction 2-C-methyl-D-erythritol 4-phosphate + NADP(+) = 1-deoxy-D-xylulose 5-phosphate + NADPH + H(+). It functions in the pathway isoprenoid biosynthesis; isopentenyl diphosphate biosynthesis via DXP pathway; isopentenyl diphosphate from 1-deoxy-D-xylulose 5-phosphate: step 1/6. Functionally, catalyzes the NADPH-dependent rearrangement and reduction of 1-deoxy-D-xylulose-5-phosphate (DXP) to 2-C-methyl-D-erythritol 4-phosphate (MEP). This is 1-deoxy-D-xylulose 5-phosphate reductoisomerase from Xylella fastidiosa (strain M23).